Consider the following 431-residue polypeptide: tRNA (adenine(37)-N6)-methyltransferase (431 aa).

The region spanning 30 to 168 is the TsaA-like domain; sequence TEPIGYLESC…YIADYDSPQN (139 aa). S-adenosyl-L-methionine is bound by residues 47–49, 90–91, arginine 117, leucine 127, and 148–151; these read PRQ, HK, and IDGT. The interval 196–242 is disordered; the sequence is LSGRGKVQPRQSTKERPKCLEDRTSGENSQKSRDMSEIQHTLPEDRE. Basic and acidic residues predominate over residues 207 to 242; the sequence is STKERPKCLEDRTSGENSQKSRDMSEIQHTLPEDRE.

The protein belongs to the tRNA methyltransferase O family.

It carries out the reaction N(6)-L-threonylcarbamoyladenosine(37) in tRNA + S-adenosyl-L-methionine = N(6)-methyl,N(6)-L-threonylcarbamoyladenosine(37) in tRNA + S-adenosyl-L-homocysteine + H(+). Functionally, S-adenosyl-L-methionine-dependent methyltransferase responsible for the addition of the methyl group in the formation of N6-methyl-N6-threonylcarbamoyladenosine at position 37 (m(6)t(6)A37) of the tRNA anticodon loop of tRNA(Ser)(GCU). The methyl group of m(6)t(6)A37 may improve the efficiency of the tRNA decoding ability. May bind to tRNA. This is tRNA (adenine(37)-N6)-methyltransferase from Mus musculus (Mouse).